Reading from the N-terminus, the 166-residue chain is UPF0561 protein C2orf68 (166 aa).

The tract at residues 32–107 (NQIARDDYDK…SELEPSGHQL (76 aa)) is disordered. Composition is skewed to basic and acidic residues over residues 34–49 (IARDDYDKKVKQAAKE) and 73–85 (RHRDVSAHPRNPD). Residues 91-104 (ESSSSGGSELEPSG) show a composition bias toward low complexity.

It belongs to the UPF0561 family.

The protein is UPF0561 protein C2orf68 (C2orf68) of Homo sapiens (Human).